The sequence spans 196 residues: GTP cyclohydrolase-2 (196 aa).

49–53 (RVHSE) lines the GTP pocket. Residues cysteine 54, cysteine 65, and cysteine 67 each contribute to the Zn(2+) site. GTP contacts are provided by residues glutamine 70, 92-94 (EGR), and threonine 114. Aspartate 126 (proton acceptor) is an active-site residue. The Nucleophile role is filled by arginine 128. GTP is bound by residues threonine 149 and lysine 154.

Belongs to the GTP cyclohydrolase II family. Homodimer. The cofactor is Zn(2+).

The catalysed reaction is GTP + 4 H2O = 2,5-diamino-6-hydroxy-4-(5-phosphoribosylamino)-pyrimidine + formate + 2 phosphate + 3 H(+). It participates in cofactor biosynthesis; riboflavin biosynthesis; 5-amino-6-(D-ribitylamino)uracil from GTP: step 1/4. In terms of biological role, catalyzes the conversion of GTP to 2,5-diamino-6-ribosylamino-4(3H)-pyrimidinone 5'-phosphate (DARP), formate and pyrophosphate. The protein is GTP cyclohydrolase-2 of Citrobacter koseri (strain ATCC BAA-895 / CDC 4225-83 / SGSC4696).